Here is a 3101-residue protein sequence, read N- to C-terminus: Probable polyketide synthase 32 (3101 aa).

The Ketosynthase family 3 (KS3) domain maps to 27–465 (SGDVAVIGIG…GSNVCLILSE (439 aa)). Catalysis depends on for beta-ketoacyl synthase activity residues Cys-199, His-338, and His-388. The acyl/malonyl transferase stretch occupies residues 664 to 697 (GVSADIIIGHSLGEVSSAYCSGMIDFETLCYLTY). Ser-674 (for acyl/malonyl transferase activity) is an active-site residue. The tract at residues 965–1087 (GPSINNLGNN…GNFSLTKHNS (123 aa)) is N-terminal hotdog fold. The region spanning 965–1287 (GPSINNLGNN…CTLVSLPNPE (323 aa)) is the PKS/mFAS DH domain. His-999 serves as the catalytic Proton acceptor; for dehydratase activity. The segment at 1104-1287 (NFTSISKQDL…CTLVSLPNPE (184 aa)) is C-terminal hotdog fold. The Proton donor; for dehydratase activity role is filled by Asp-1176. The interval 1209-1236 (KNGNNNDDDEESNNNNNNNNNNNNNNNN) is disordered. The segment covering 1221–1236 (NNNNNNNNNNNNNNNN) has biased composition (low complexity). The region spanning 2550–2627 (DNNEIIRSTI…QSIEIIKSAN (78 aa)) is the Carrier domain. An O-(pantetheine 4'-phosphoryl)serine modification is found at Ser-2587. The tract at residues 2627-2648 (NNKNNKNNNNNNNNKTNKNNNN) is disordered.

Pantetheine 4'-phosphate is required as a cofactor.

In terms of biological role, probable polyketide synthase. In Dictyostelium discoideum (Social amoeba), this protein is Probable polyketide synthase 32 (pks32).